The sequence spans 278 residues: Acetyl-coenzyme A carboxylase carboxyl transferase subunit beta (278 aa).

A CoA carboxyltransferase N-terminal domain is found at L23 to K278. 4 residues coordinate Zn(2+): C27, C30, C46, and C49. The C4-type zinc-finger motif lies at C27–C49.

It belongs to the AccD/PCCB family. Acetyl-CoA carboxylase is a heterohexamer composed of biotin carboxyl carrier protein (AccB), biotin carboxylase (AccC) and two subunits each of ACCase subunit alpha (AccA) and ACCase subunit beta (AccD). Requires Zn(2+) as cofactor.

The protein resides in the cytoplasm. It carries out the reaction N(6)-carboxybiotinyl-L-lysyl-[protein] + acetyl-CoA = N(6)-biotinyl-L-lysyl-[protein] + malonyl-CoA. It functions in the pathway lipid metabolism; malonyl-CoA biosynthesis; malonyl-CoA from acetyl-CoA: step 1/1. Functionally, component of the acetyl coenzyme A carboxylase (ACC) complex. Biotin carboxylase (BC) catalyzes the carboxylation of biotin on its carrier protein (BCCP) and then the CO(2) group is transferred by the transcarboxylase to acetyl-CoA to form malonyl-CoA. This is Acetyl-coenzyme A carboxylase carboxyl transferase subunit beta from Chlorobaculum tepidum (strain ATCC 49652 / DSM 12025 / NBRC 103806 / TLS) (Chlorobium tepidum).